A 225-amino-acid polypeptide reads, in one-letter code: MNPLAPVLTIDGPSGAGKGTISRIVARRMGWHYLDSGALYRAVGVAASWADIDTSDASALVRCTFDTHVQFVEQGEAMRVMVNGTDATDELRLETTGALASAIAAIPEVRAALKERQRAFRELPGLVADGRDMGTVIFPDASYKVFLTASAEERAERRHKQLKDKGVSVNFDDLLREIMARDARDAQRTVAPLKPADDAVLIDTTGIGIDDVVARVMDLLPVPAA.

An ATP-binding site is contributed by 12 to 20; that stretch reads GPSGAGKGT.

The protein belongs to the cytidylate kinase family. Type 1 subfamily.

The protein resides in the cytoplasm. The enzyme catalyses CMP + ATP = CDP + ADP. The catalysed reaction is dCMP + ATP = dCDP + ADP. The sequence is that of Cytidylate kinase from Stenotrophomonas maltophilia (strain R551-3).